The primary structure comprises 258 residues: Acyl-[acyl-carrier-protein]--UDP-N-acetylglucosamine O-acyltransferase (258 aa).

The protein belongs to the transferase hexapeptide repeat family. LpxA subfamily. Homotrimer.

Its subcellular location is the cytoplasm. The enzyme catalyses a (3R)-hydroxyacyl-[ACP] + UDP-N-acetyl-alpha-D-glucosamine = a UDP-3-O-[(3R)-3-hydroxyacyl]-N-acetyl-alpha-D-glucosamine + holo-[ACP]. It participates in glycolipid biosynthesis; lipid IV(A) biosynthesis; lipid IV(A) from (3R)-3-hydroxytetradecanoyl-[acyl-carrier-protein] and UDP-N-acetyl-alpha-D-glucosamine: step 1/6. In terms of biological role, involved in the biosynthesis of lipid A, a phosphorylated glycolipid that anchors the lipopolysaccharide to the outer membrane of the cell. In Pseudomonas aeruginosa (strain LESB58), this protein is Acyl-[acyl-carrier-protein]--UDP-N-acetylglucosamine O-acyltransferase.